We begin with the raw amino-acid sequence, 245 residues long: Adenosylcobinamide-GDP ribazoletransferase (245 aa).

A run of 5 helical transmembrane segments spans residues phenylalanine 31–alanine 51, proline 61–leucine 81, valine 113–leucine 133, alanine 138–threonine 158, and leucine 192–leucine 212.

It belongs to the CobS family. The cofactor is Mg(2+).

The protein localises to the cell inner membrane. The enzyme catalyses alpha-ribazole + adenosylcob(III)inamide-GDP = adenosylcob(III)alamin + GMP + H(+). It catalyses the reaction alpha-ribazole 5'-phosphate + adenosylcob(III)inamide-GDP = adenosylcob(III)alamin 5'-phosphate + GMP + H(+). It participates in cofactor biosynthesis; adenosylcobalamin biosynthesis; adenosylcobalamin from cob(II)yrinate a,c-diamide: step 7/7. Joins adenosylcobinamide-GDP and alpha-ribazole to generate adenosylcobalamin (Ado-cobalamin). Also synthesizes adenosylcobalamin 5'-phosphate from adenosylcobinamide-GDP and alpha-ribazole 5'-phosphate. The sequence is that of Adenosylcobinamide-GDP ribazoletransferase from Pseudomonas aeruginosa (strain UCBPP-PA14).